The sequence spans 172 residues: Peptide methionine sulfoxide reductase MsrA 2 (172 aa).

C12 is a catalytic residue.

This sequence belongs to the MsrA Met sulfoxide reductase family.

The catalysed reaction is L-methionyl-[protein] + [thioredoxin]-disulfide + H2O = L-methionyl-(S)-S-oxide-[protein] + [thioredoxin]-dithiol. It carries out the reaction [thioredoxin]-disulfide + L-methionine + H2O = L-methionine (S)-S-oxide + [thioredoxin]-dithiol. Functionally, has an important function as a repair enzyme for proteins that have been inactivated by oxidation. Catalyzes the reversible oxidation-reduction of methionine sulfoxide in proteins to methionine. The polypeptide is Peptide methionine sulfoxide reductase MsrA 2 (msrA2) (Lactococcus lactis subsp. lactis (strain IL1403) (Streptococcus lactis)).